The following is a 124-amino-acid chain: Small ribosomal subunit protein uS12 (124 aa).

Residue D89 is modified to 3-methylthioaspartic acid.

The protein belongs to the universal ribosomal protein uS12 family. In terms of assembly, part of the 30S ribosomal subunit. Contacts proteins S8 and S17. May interact with IF1 in the 30S initiation complex.

In terms of biological role, with S4 and S5 plays an important role in translational accuracy. Its function is as follows. Interacts with and stabilizes bases of the 16S rRNA that are involved in tRNA selection in the A site and with the mRNA backbone. Located at the interface of the 30S and 50S subunits, it traverses the body of the 30S subunit contacting proteins on the other side and probably holding the rRNA structure together. The combined cluster of proteins S8, S12 and S17 appears to hold together the shoulder and platform of the 30S subunit. In Histophilus somni (strain 129Pt) (Haemophilus somnus), this protein is Small ribosomal subunit protein uS12.